A 61-amino-acid chain; its full sequence is Small ribosomal subunit protein uS14 (61 aa).

C24, C27, C40, and C43 together coordinate Zn(2+).

Belongs to the universal ribosomal protein uS14 family. Zinc-binding uS14 subfamily. As to quaternary structure, part of the 30S ribosomal subunit. Contacts proteins S3 and S10. Requires Zn(2+) as cofactor.

Functionally, binds 16S rRNA, required for the assembly of 30S particles and may also be responsible for determining the conformation of the 16S rRNA at the A site. This is Small ribosomal subunit protein uS14 from Desulfosudis oleivorans (strain DSM 6200 / JCM 39069 / Hxd3) (Desulfococcus oleovorans).